We begin with the raw amino-acid sequence, 159 residues long: Eukaryotic translation initiation factor 5A-2 (159 aa).

Residues 1 to 12 (MSDEEHQFESKA) are compositionally biased toward basic and acidic residues. The segment at 1–23 (MSDEEHQFESKADAGASKTYPQQ) is disordered. Lys-52 is modified (hypusine).

The protein belongs to the eIF-5A family. Post-translationally, lys-52 undergoes hypusination, a unique post-translational modification that consists in the addition of a butylamino group from spermidine to lysine side chain, leading to the formation of the unusual amino acid hypusine. eIF-5As are the only known proteins to undergo this modification, which is essential for their function.

Translation factor that promotes translation elongation and termination, particularly upon ribosome stalling at specific amino acid sequence contexts. Binds between the exit (E) and peptidyl (P) site of the ribosome and promotes rescue of stalled ribosome: specifically required for efficient translation of polyproline-containing peptides as well as other motifs that stall the ribosome. Acts as a ribosome quality control (RQC) cofactor by joining the RQC complex to facilitate peptidyl transfer during CAT tailing step. This is Eukaryotic translation initiation factor 5A-2 (EIF-5A2) from Nicotiana plumbaginifolia (Leadwort-leaved tobacco).